The chain runs to 160 residues: Transcriptional repressor NrdR (160 aa).

A zinc finger lies at 3–34 (CPYCQYEDTQVKDSRPSEEGTVIRRRRICSVC). The ATP-cone domain occupies 49-139 (LLVLKKSGRY…VYRDFRNASD (91 aa)).

This sequence belongs to the NrdR family. Zn(2+) is required as a cofactor.

Its function is as follows. Negatively regulates transcription of bacterial ribonucleotide reductase nrd genes and operons by binding to NrdR-boxes. The sequence is that of Transcriptional repressor NrdR from Bartonella henselae (strain ATCC 49882 / DSM 28221 / CCUG 30454 / Houston 1) (Rochalimaea henselae).